A 287-amino-acid chain; its full sequence is Myogenin (287 aa).

A phosphoserine; by CaMK2G mark is found at S77 and S79. The bHLH domain maps to 81 to 132; that stretch reads DRRRAATLREKRRLKKVNEAFEALKRSTLLNPNQRLPKVEILRSAIQYIERL. Position 87 is a phosphothreonine; by CaMK2G (T87).

Homodimer and heterodimer with E12; heterodimerization enhances MYOG DNA-binding and transcriptional activities. Interacts with SMARCA4/BRG1/BAF190A. Interacts (via C-terminal region) with SSRP1 and SUPT16H; the interaction is indicative of an interaction with the FACT complex. Interacts with CSRP3. Phosphorylated by CAMK2G on threonine and serine amino acids in a muscle activity-dependent manner. Phosphorylation of Thr-87 impairs both DNA-binding and trans-activation functions in contracting muscles. As to expression, expressed in muscle (at protein level).

It is found in the nucleus. In terms of biological role, acts as a transcriptional activator that promotes transcription of muscle-specific target genes and plays a role in muscle differentiation, cell cycle exit and muscle atrophy. Essential for the development of functional embryonic skeletal fiber muscle differentiation. However is dispensable for postnatal skeletal muscle growth; phosphorylation by CAMK2G inhibits its transcriptional activity in respons to muscle activity. Required for the recruitment of the FACT complex to muscle-specific promoter regions, thus promoting gene expression initiation. During terminal myoblast differentiation, plays a role as a strong activator of transcription at loci with an open chromatin structure previously initiated by MYOD1. Together with MYF5 and MYOD1, co-occupies muscle-specific gene promoter core regions during myogenesis. Also cooperates with myocyte-specific enhancer factor MEF2D and BRG1-dependent recruitment of SWI/SNF chromatin-remodeling enzymes to alter chromatin structure at myogenic late gene promoters. Facilitates cell cycle exit during terminal muscle differentiation through the up-regulation of miR-20a expression, which in turn represses genes involved in cell cycle progression. Binds to the E-box containing (E1) promoter region of the miR-20a gene. Also plays a role in preventing reversal of muscle cell differentiation. Contributes to the atrophy-related gene expression in adult denervated muscles. Induces fibroblasts to differentiate into myoblasts. The protein is Myogenin (Myog) of Rattus norvegicus (Rat).